A 654-amino-acid chain; its full sequence is Fructose-1,6-bisphosphatase class 3 (654 aa).

Residues Asn288–Glu307 are disordered. Positions Asp298 to Glu307 are enriched in basic and acidic residues.

It belongs to the FBPase class 3 family. Mn(2+) serves as cofactor.

The catalysed reaction is beta-D-fructose 1,6-bisphosphate + H2O = beta-D-fructose 6-phosphate + phosphate. The protein operates within carbohydrate biosynthesis; gluconeogenesis. The protein is Fructose-1,6-bisphosphatase class 3 of Staphylococcus aureus (strain MSSA476).